Reading from the N-terminus, the 358-residue chain is MEAKGAAQWSSILVPSVQEMVKEKTITTVPPRYVRSDQDKTEVDDDFDVKIEIPIIDMKRLCSSTTMDSEVEKLDFACKEWGFFQLVNHGIDSSFLDKVKSEIQDFFNLPMEEKKKFWQRPDEIEGFGQAFVVSEDQKLDWADLFFHTVQPVELRKPHLFPKLPLPFRDTLEMYSSEVQSVAKILIAKMARALEIKPEELEKLFDDVDSVQSMRMNYYPPCPQPDQVIGLTPHSDSVGLTVLMQVNDVEGLQIKKDGKWVPVKPLPNAFIVNIGDVLEIITNGTYRSIEHRGVVNSEKERLSIATFHNVGMYKEVGPAKSLVERQKVARFKRLTMKEYNDGLFSRTLDGKAYLDALRI.

Residues 209–309 (SVQSMRMNYY…RLSIATFHNV (101 aa)) enclose the Fe2OG dioxygenase domain. Fe cation is bound by residues His233, Asp235, and His290.

This sequence belongs to the iron/ascorbate-dependent oxidoreductase family. As to expression, low expression in roots and leaves.

The protein is Protein SRG1 (SRG1) of Arabidopsis thaliana (Mouse-ear cress).